The sequence spans 351 residues: Biotin synthase (351 aa).

One can recognise a Radical SAM core domain in the interval 58 to 285; the sequence is NTVQLSTLLS…RAMVRLSAGR (228 aa). Residues Cys-73, Cys-77, and Cys-80 each coordinate [4Fe-4S] cluster. 4 residues coordinate [2Fe-2S] cluster: Cys-117, Cys-148, Cys-208, and Arg-280.

It belongs to the radical SAM superfamily. Biotin synthase family. As to quaternary structure, homodimer. It depends on [4Fe-4S] cluster as a cofactor. The cofactor is [2Fe-2S] cluster.

It carries out the reaction (4R,5S)-dethiobiotin + (sulfur carrier)-SH + 2 reduced [2Fe-2S]-[ferredoxin] + 2 S-adenosyl-L-methionine = (sulfur carrier)-H + biotin + 2 5'-deoxyadenosine + 2 L-methionine + 2 oxidized [2Fe-2S]-[ferredoxin]. It participates in cofactor biosynthesis; biotin biosynthesis; biotin from 7,8-diaminononanoate: step 2/2. Its function is as follows. Catalyzes the conversion of dethiobiotin (DTB) to biotin by the insertion of a sulfur atom into dethiobiotin via a radical-based mechanism. The sequence is that of Biotin synthase from Paraburkholderia phymatum (strain DSM 17167 / CIP 108236 / LMG 21445 / STM815) (Burkholderia phymatum).